The following is a 303-amino-acid chain: Acetaldehyde dehydrogenase 1 (303 aa).

Cysteine 130 functions as the Acyl-thioester intermediate in the catalytic mechanism. NAD(+) contacts are provided by residues 161–169 (SVGPGTRKN) and asparagine 272.

It belongs to the acetaldehyde dehydrogenase family.

It carries out the reaction acetaldehyde + NAD(+) + CoA = acetyl-CoA + NADH + H(+). The chain is Acetaldehyde dehydrogenase 1 from Cupriavidus metallidurans (strain ATCC 43123 / DSM 2839 / NBRC 102507 / CH34) (Ralstonia metallidurans).